The sequence spans 242 residues: MTNHKKEALLQNFNKKFADKMHMLKLNYDHLPLYQQAFSHSSFINDFNMDRLAHNERLEFLGDAVLELTVSRYLFDKYPELPEGNLTKMRATIVCEPSLVIFANKIQLNELILLGKGEEKTGGRTRPSLVSDAFEAFVGALYLDQGLDAVWQFSEEVIFPHVEDDELMGVVDFKTQFQELIHRLSKGNVTYRLIDEQGPAHHRLFTSEVLLEGEPVAKGQGRTKKESEQKAAEKAYNDMKKK.

Residues 10–146 enclose the RNase III domain; that stretch reads LQNFNKKFAD…FVGALYLDQG (137 aa). Residue Glu-59 coordinates Mg(2+). The active site involves Asp-63. Mg(2+) is bound by residues Asp-132 and Glu-135. Residue Glu-135 is part of the active site. The DRBM domain occupies 172–241; that stretch reads DFKTQFQELI…AEKAYNDMKK (70 aa). The tract at residues 216–242 is disordered; it reads VAKGQGRTKKESEQKAAEKAYNDMKKK. The span at 223-242 shows a compositional bias: basic and acidic residues; that stretch reads TKKESEQKAAEKAYNDMKKK.

It belongs to the ribonuclease III family. In terms of assembly, homodimer. Mg(2+) serves as cofactor.

The protein resides in the cytoplasm. The catalysed reaction is Endonucleolytic cleavage to 5'-phosphomonoester.. Functionally, digests double-stranded RNA. Involved in the processing of primary rRNA transcript to yield the immediate precursors to the large and small rRNAs (23S and 16S). Processes some mRNAs, and tRNAs when they are encoded in the rRNA operon. Processes pre-crRNA and tracrRNA of type II CRISPR loci if present in the organism. In Staphylococcus carnosus (strain TM300), this protein is Ribonuclease 3.